An 87-amino-acid polypeptide reads, in one-letter code: Putative outer membrane protein ArbH (87 aa).

The first 23 residues, 1-23, serve as a signal peptide directing secretion; the sequence is MKIKNSYLVIASLLYPISFISTA.

It belongs to the porin LamB (TC 1.B.3) family.

Its subcellular location is the cell outer membrane. May be a sugar porin with a broad carbohydrate specificity. This is Putative outer membrane protein ArbH (arbH) from Dickeya chrysanthemi (Pectobacterium chrysanthemi).